The primary structure comprises 128 residues: U24-ctenitoxin-Pn1a (128 aa).

2 consecutive Thyroglobulin type-1 domains span residues 4 to 67 (KSDC…ECGC) and 72 to 127 (KERK…SLKC). Intrachain disulfides connect cysteine 7–cysteine 27, cysteine 38–cysteine 45, cysteine 47–cysteine 67, and cysteine 107–cysteine 127.

In terms of tissue distribution, expressed by the venom gland.

It is found in the secreted. Cysteine proteinase inhibitor. The chain is U24-ctenitoxin-Pn1a from Phoneutria nigriventer (Brazilian armed spider).